The following is a 214-amino-acid chain: Histidine biosynthesis bifunctional protein HisIE (214 aa).

Positions 1–125 are phosphoribosyl-AMP cyclohydrolase; the sequence is MPATALSLPL…ESIEPPPADT (125 aa). Positions 126–214 are phosphoribosyl-ATP pyrophosphohydrolase; the sequence is LSQVYNIVCQ…VYEQLQLRRR (89 aa).

It in the N-terminal section; belongs to the PRA-CH family. In the C-terminal section; belongs to the PRA-PH family.

It is found in the cytoplasm. It catalyses the reaction 1-(5-phospho-beta-D-ribosyl)-ATP + H2O = 1-(5-phospho-beta-D-ribosyl)-5'-AMP + diphosphate + H(+). It carries out the reaction 1-(5-phospho-beta-D-ribosyl)-5'-AMP + H2O = 1-(5-phospho-beta-D-ribosyl)-5-[(5-phospho-beta-D-ribosylamino)methylideneamino]imidazole-4-carboxamide. Its pathway is amino-acid biosynthesis; L-histidine biosynthesis; L-histidine from 5-phospho-alpha-D-ribose 1-diphosphate: step 2/9. It functions in the pathway amino-acid biosynthesis; L-histidine biosynthesis; L-histidine from 5-phospho-alpha-D-ribose 1-diphosphate: step 3/9. This Thermosynechococcus vestitus (strain NIES-2133 / IAM M-273 / BP-1) protein is Histidine biosynthesis bifunctional protein HisIE.